Reading from the N-terminus, the 233-residue chain is Phosphatidylserine decarboxylase proenzyme (233 aa).

Ser201 acts as the Schiff-base intermediate with substrate; via pyruvic acid in catalysis. The residue at position 201 (Ser201) is a Pyruvic acid (Ser); by autocatalysis.

This sequence belongs to the phosphatidylserine decarboxylase family. PSD-A subfamily. Heterodimer of a large membrane-associated beta subunit and a small pyruvoyl-containing alpha subunit. Requires pyruvate as cofactor. In terms of processing, is synthesized initially as an inactive proenzyme. Formation of the active enzyme involves a self-maturation process in which the active site pyruvoyl group is generated from an internal serine residue via an autocatalytic post-translational modification. Two non-identical subunits are generated from the proenzyme in this reaction, and the pyruvate is formed at the N-terminus of the alpha chain, which is derived from the carboxyl end of the proenzyme. The post-translation cleavage follows an unusual pathway, termed non-hydrolytic serinolysis, in which the side chain hydroxyl group of the serine supplies its oxygen atom to form the C-terminus of the beta chain, while the remainder of the serine residue undergoes an oxidative deamination to produce ammonia and the pyruvoyl prosthetic group on the alpha chain.

It is found in the cell membrane. It carries out the reaction a 1,2-diacyl-sn-glycero-3-phospho-L-serine + H(+) = a 1,2-diacyl-sn-glycero-3-phosphoethanolamine + CO2. The protein operates within phospholipid metabolism; phosphatidylethanolamine biosynthesis; phosphatidylethanolamine from CDP-diacylglycerol: step 2/2. Catalyzes the formation of phosphatidylethanolamine (PtdEtn) from phosphatidylserine (PtdSer). The chain is Phosphatidylserine decarboxylase proenzyme from Mycolicibacterium vanbaalenii (strain DSM 7251 / JCM 13017 / BCRC 16820 / KCTC 9966 / NRRL B-24157 / PYR-1) (Mycobacterium vanbaalenii).